Consider the following 2241-residue polypeptide: GON-4-like protein (2241 aa).

Disordered regions lie at residues M1–S46 and K122–Q259. Positions S30 to K40 are enriched in basic and acidic residues. Basic residues predominate over residues K122–T135. Over residues Q143–L152 the composition is skewed to basic and acidic residues. Residues P183–P201 show a composition bias toward polar residues. S206 carries the phosphoserine modification. A compositionally biased stretch (basic residues) spans R243–D255. S346 is subject to Phosphoserine. Residues E366–V394 are compositionally biased toward acidic residues. The disordered stretch occupies residues E366–S460. The interval E600–S1339 is required for interaction with YY1, SIN3A and HDAC1, and transcriptional repression activity. S775 bears the Phosphoserine mark. 2 disordered regions span residues P1008–P1031 and R1111–M1131. Residues R1111–V1125 are compositionally biased toward basic residues. S1268 is subject to Phosphoserine. Disordered stretches follow at residues A1301–D1320 and L1356–A1601. The segment covering P1386 to S1416 has biased composition (polar residues). Phosphoserine is present on S1426. Polar residues predominate over residues S1434–G1443. 2 stretches are compositionally biased toward acidic residues: residues E1458–M1476 and G1510–G1534. Basic residues predominate over residues R1586–R1600. PAH domains are found at residues E1624–E1696 and E1706–L1777. A disordered region spans residues P1809–R1960. Composition is skewed to basic and acidic residues over residues N1836–K1848 and C1879–A1901. Phosphoserine is present on residues S1896, S1902, and S1977. 3 disordered regions span residues E2002 to E2025, E2039 to T2149, and C2208 to E2241. S2107 carries the phosphoserine modification. Residues C2140–T2149 are compositionally biased toward polar residues. Residues S2148–M2201 form the Myb-like domain.

In terms of assembly, found in a complex with YY1, SIN3A and HDAC1.

It localises to the nucleus. In terms of biological role, has transcriptional repressor activity, probably as part of a complex with YY1, SIN3A and HDAC1. Required for B cell lymphopoiesis. This is GON-4-like protein (GON4L) from Homo sapiens (Human).